We begin with the raw amino-acid sequence, 1771 residues long: Atrochrysone carboxylic acid synthase (1771 aa).

Residues 38-269 form an N-terminal acylcarrier protein transacylase domain (SAT) region; it reads HLHSKDRRHH…SLPVFGGLCH (232 aa). The 435-residue stretch at 402 to 836 folds into the Ketosynthase family 3 (KS3) domain; the sequence is QSKIAIVGMS…GGNTSVVLEE (435 aa). Catalysis depends on for beta-ketoacyl synthase activity residues Cys575, His711, and His754. The malonyl-CoA:ACP transacylase (MAT) domain stretch occupies residues 937-1257; sequence FAFTGQGASY…LSSLHCAGVE (321 aa). Positions 1322-1641 are product template (PT) domain; it reads TSTVQKIVEE…RLLLNRFFSP (320 aa). The interval 1326–1461 is N-terminal hotdog fold; it reads QKIVEESFDG…AKIYYCDASE (136 aa). Residues 1326–1636 enclose the PKS/mFAS DH domain; sequence QKIVEESFDG…FRRYPRLLLN (311 aa). The Proton acceptor; for dehydratase activity role is filled by His1358. A C-terminal hotdog fold region spans residues 1488-1636; the sequence is IANRFSGRMA…FRRYPRLLLN (149 aa). Residue Asp1547 is the Proton donor; for dehydratase activity of the active site. The segment covering 1668-1681 has biased composition (low complexity); that stretch reads AATSTTSTTSTAST. The tract at residues 1668–1695 is disordered; it reads AATSTTSTTSTASTGQPPKVDETSPVDS. Residues 1693–1770 enclose the Carrier domain; that stretch reads VDSNSTAARA…DLKSWLLEYY (78 aa). The residue at position 1730 (Ser1730) is an O-(pantetheine 4'-phosphoryl)serine.

The catalysed reaction is holo-[ACP] + 8 malonyl-CoA + 8 H(+) = atrochrysone carboxyl-[ACP] + 8 CO2 + 8 CoA + 2 H2O. The protein operates within secondary metabolite biosynthesis. In terms of biological role, non-reducing polyketide synthase; part of the gene cluster that mediates the biosynthesis of geodin, an intermediate in the biosynthesis of other natural products. The pathway begins with the synthesis of atrochrysone thioester by the polyketide synthase (PKS) gedC. The atrochrysone carboxyl ACP thioesterase gedB then breaks the thioester bond and releases the atrochrysone carboxylic acid from gedC. The atrochrysone carboxylic acid is then converted to atrochrysone which is further transformed into emodinanthrone. The next step is performed by the emodinanthrone oxygenase gedH that catalyzes the oxidation of emodinanthrone to emodin. Emodin O-methyltransferase encoded probably by gedA then catalyzes methylation of the 8-hydroxy group of emodin to form questin. Ring cleavage of questin by questin oxidase gedK leads to desmethylsulochrin via several intermediates including questin epoxide. Another methylation step probably catalyzed by methyltransferase gedG leads to the formation of sulochrin which is further converted to dihydrogeodin by the sulochrin halogenase gedL. Finally, the dihydrogeodin oxidase gedJ catalyzes the stereospecific phenol oxidative coupling reaction converting dihydrogeodin to geodin. The polypeptide is Atrochrysone carboxylic acid synthase (Aspergillus terreus (strain NIH 2624 / FGSC A1156)).